Reading from the N-terminus, the 446-residue chain is MMTTLRKLPLAVAVAAGMMSVQAMAVDFHGYARSGIGWTGSGGEQQCFQTTGAQSKYRLGNECETYAELKLGQEVWKEGDKSFYFDTNVAYSVAQQNDWEATSPAFREANVQGKNLIDALPGATIWAGKRFYQRHDVHMIDFYYWDISGPGAGLENIDLGFGKLSLAATRSSEAGGSSSFASDNIYDYVNETANDVFDVRLAQMEINPGGTLELGVDYGRANLRDDYRLVDGASKDGWMFTAEHTQSMLKGFNKFVVQYATDAMTSQGKGLNQGSGVAFDNEHFAYNINNNGHLLRILDHGAISLGDNWDMMYVGMYQDINWDNDNGTKWWTVGIRPMYKWTPIMSTLLEVGYDNVESQRTGDKNNQYKITLAQQWQAGDSIWSRPAIRVFATYAKWDEKWGYDYNDNSKTNPNYGKAVPANFEGGSFGRGDSDEWTFGAQMEIWW.

Positions 1–25 are cleaved as a signal peptide; it reads MMTTLRKLPLAVAVAAGMMSVQAMA.

The protein belongs to the porin LamB (TC 1.B.3) family. Homotrimer formed of three 18-stranded antiparallel beta-barrels, containing three independent channels.

It localises to the cell outer membrane. The enzyme catalyses beta-maltose(in) = beta-maltose(out). Involved in the transport of maltose and maltodextrins. The chain is Maltoporin from Escherichia fergusonii (strain ATCC 35469 / DSM 13698 / CCUG 18766 / IAM 14443 / JCM 21226 / LMG 7866 / NBRC 102419 / NCTC 12128 / CDC 0568-73).